Consider the following 502-residue polypeptide: Ubiquilin (502 aa).

Positions 8-83 constitute a Ubiquitin-like domain; that stretch reads IKVHVKSPSN…VHLVIRNQAR (76 aa). The segment covering 84–115 has biased composition (low complexity); the sequence is PTPAPAAATPTASSAPSSNPTPSSQPNPTNNP. The segment at 84 to 136 is disordered; sequence PTPAPAAATPTASSAPSSNPTPSSQPNPTNNPFAAMGGMGSPADILNNPDAMR. STI1 domains follow at residues 124-157 and 161-200; these read SPAD…MRTI and NPQF…FQEM. The segment covering 235-251 has biased composition (polar residues); sequence SATNSLSGNPFASLRGD. Residues 235-294 are disordered; the sequence is SATNSLSGNPFASLRGDQSSEPRVDRAGQENNEALPNPWASNANQATNNQSNNRSADFNS. The segment covering 252 to 262 has biased composition (basic and acidic residues); that stretch reads QSSEPRVDRAG. Residues 274 to 290 show a composition bias toward low complexity; that stretch reads ASNANQATNNQSNNRSA. STI1 domains are found at residues 289–327 and 351–387; these read SADF…INSI and NPQI…SEAF. The UBA domain occupies 455 to 501; the sequence is PVNPEQTYASQLEQLQSMGFSDRARNVAALTATFGDLNAAVERLLNS.

Expressed in the pharynx, hypodermis, intestine and head neurons. Upon ER stress, expressed predominantly in pharyngeal muscle, hypodermis and intestine.

In terms of biological role, may play a role in the ER-associated protein degradation pathway (ERAD) possibly via its interaction with ER-localized proteins ubxn-4 and cdc-48.1 and/or cdc48.2, providing a link between the polyubiquitinated ERAD substrates and the proteasome. Also plays an important role in the regulation of other protein degradation mechanisms and pathways including ubiquitin-proteasome system (UPS) and autophagy. Mediates the proteasomal targeting of misfolded or accumulated proteins for degradation by binding (via UBA domain) to their polyubiquitin chains and by interacting (via ubiquitin-like domain) with the subunits of the proteasome. Collaborates with POST (F36D4.5) in the export of ubiquitinated proteins from the nucleus to the cytoplasm. Also acts as a regulator of DNA repair by inhibiting homologous recombination repair, thereby redirecting double-strand break repair toward non-homologous end joining (NHEJ). This is Ubiquilin from Caenorhabditis elegans.